Consider the following 85-residue polypeptide: MKKSFLFTFTVLTIFTILVIGVAPEKLTTCSRFLSQKSGKCVKEDCDRMCKQKWPGKYTVGHCYGQFKDAKRCLCSVCGPDRQPP.

The N-terminal stretch at 1–24 (MKKSFLFTFTVLTIFTILVIGVAP) is a signal peptide. Intrachain disulfides connect C30-C78, C41-C63, C46-C73, and C50-C75.

Belongs to the DEFL family.

The protein resides in the secreted. The polypeptide is Putative defensin-like protein 142 (LCR34) (Arabidopsis thaliana (Mouse-ear cress)).